Here is a 261-residue protein sequence, read N- to C-terminus: MNKTIIAERFSKAISTYPREANVQRQIANKMIRLLQKHIPSPCPKVIEFGCGTGIYSRMLLRTLRPEELLLNDLCPEMRYCCEDLLREKQVSFLSGDAETISFPDKSTLITSCSALQWFDSPEEFFKRCNTLLHSQGYFAFSTFGKKNMKEIRELTGKGLPYRSREELEAALSLHFDILYSEEELIPLSFEDPMKVLYHLKQTGVNGLSAQSSLYPKHEKQTWTRRDLQHFCERYTQEFTQGTSVSLTYHPIYIIAKKKKV.

Belongs to the methyltransferase superfamily.

It catalyses the reaction malonyl-[ACP] + S-adenosyl-L-methionine = malonyl-[ACP] methyl ester + S-adenosyl-L-homocysteine. Its pathway is cofactor biosynthesis; biotin biosynthesis. Its function is as follows. Converts the free carboxyl group of a malonyl-thioester to its methyl ester by transfer of a methyl group from S-adenosyl-L-methionine (SAM). It allows to synthesize pimeloyl-ACP via the fatty acid synthetic pathway. The chain is Malonyl-[acyl-carrier protein] O-methyltransferase from Bacteroides thetaiotaomicron (strain ATCC 29148 / DSM 2079 / JCM 5827 / CCUG 10774 / NCTC 10582 / VPI-5482 / E50).